Consider the following 415-residue polypeptide: Glucose-6-phosphate isomerase (415 aa).

Residue Glu267 is the Proton donor of the active site. Catalysis depends on residues His293 and Lys406.

The protein belongs to the GPI family.

It localises to the cytoplasm. The catalysed reaction is alpha-D-glucose 6-phosphate = beta-D-fructose 6-phosphate. Its pathway is carbohydrate biosynthesis; gluconeogenesis. It participates in carbohydrate degradation; glycolysis; D-glyceraldehyde 3-phosphate and glycerone phosphate from D-glucose: step 2/4. Its function is as follows. Catalyzes the reversible isomerization of glucose-6-phosphate to fructose-6-phosphate. The protein is Glucose-6-phosphate isomerase of Thermus thermophilus (strain ATCC 27634 / DSM 579 / HB8).